Reading from the N-terminus, the 929-residue chain is SCY1-like protein 2 (929 aa).

The 296-residue stretch at 32 to 327 (FDVGRHIASG…ADQMTKIPFF (296 aa)) folds into the Protein kinase domain. Residues 443-479 (DEIKNSVLPMVYRALEAPSIQIQELCLNIIPTFANLI) form an HEAT repeat. A coiled-coil region spans residues 661–701 (ESENKEDGLQNKHKRASLTLEEKQKLAKEQEQAQKLKSQQP). S677 bears the Phosphoserine mark. Basic and acidic residues predominate over residues 684-694 (QKLAKEQEQAQ). Disordered stretches follow at residues 684–709 (QKLA…VHTP) and 906–929 (NFAQ…DLFG). A compositionally biased stretch (low complexity) spans 695–705 (KLKSQQPLKPQ). A necessary for interaction with AP2 complex and clathrin, interaction with clathrin is necessary for its targeting to the TGN and endosomal membranes region spans residues 699 to 929 (QQPLKPQVHT…ASNDLKDLFG (231 aa)). T708 is subject to Phosphothreonine. The span at 912–922 (TTMTNSSSASN) shows a compositional bias: polar residues.

This sequence belongs to the protein kinase superfamily. Interacts with clathrin and AP2B1; the interaction mediates the association with the AP-2 complex. Post-translationally, could autophosphorylate in presence of poly-L-lysine.

It is found in the cytoplasmic vesicle. Its subcellular location is the clathrin-coated vesicle. The protein resides in the golgi apparatus. The protein localises to the trans-Golgi network membrane. It localises to the endosome membrane. Component of the AP2-containing clathrin coat that may regulate clathrin-dependent trafficking at plasma membrane, TGN and endosomal system. A possible serine/threonine-protein kinase toward the beta2-subunit of the plasma membrane adapter complex AP2 and other proteins in presence of poly-L-lysine has not been confirmed. By regulating the expression of excitatory receptors at synapses, plays an essential role in neuronal function and signaling and in brain development. The protein is SCY1-like protein 2 of Homo sapiens (Human).